A 303-amino-acid chain; its full sequence is Glutamyl-Q tRNA(Asp) synthetase (303 aa).

L-glutamate contacts are provided by residues 16-20 (RFAPS) and E52. The 'HIGH' region signature appears at 19–29 (PSPSGPLHFGS). The Zn(2+) site is built by C108, C110, Y122, and C126. L-glutamate-binding residues include Y177 and R195. The 'KMSKS' region motif lies at 233-237 (KLSKQ). K236 provides a ligand contact to ATP.

Belongs to the class-I aminoacyl-tRNA synthetase family. GluQ subfamily. Zn(2+) serves as cofactor.

Catalyzes the tRNA-independent activation of glutamate in presence of ATP and the subsequent transfer of glutamate onto a tRNA(Asp). Glutamate is transferred on the 2-amino-5-(4,5-dihydroxy-2-cyclopenten-1-yl) moiety of the queuosine in the wobble position of the QUC anticodon. This chain is Glutamyl-Q tRNA(Asp) synthetase, found in Vibrio vulnificus (strain CMCP6).